The sequence spans 530 residues: T-complex protein 1 subunit delta (530 aa).

Residues 1-13 are compositionally biased toward polar residues; it reads MVSQAKQPSNATF. The tract at residues 1-20 is disordered; that stretch reads MVSQAKQPSNATFKNREKPQ.

This sequence belongs to the TCP-1 chaperonin family. In terms of assembly, heterooligomeric complex of about 850 to 900 kDa that forms two stacked rings, 12 to 16 nm in diameter.

The protein resides in the cytoplasm. Molecular chaperone; assists the folding of proteins upon ATP hydrolysis. Known to play a role, in vitro, in the folding of actin and tubulin. The sequence is that of T-complex protein 1 subunit delta (CCT4) from Kluyveromyces lactis (strain ATCC 8585 / CBS 2359 / DSM 70799 / NBRC 1267 / NRRL Y-1140 / WM37) (Yeast).